The chain runs to 396 residues: Tryptophan synthase beta chain (396 aa).

Lysine 86 carries the N6-(pyridoxal phosphate)lysine modification.

The protein belongs to the TrpB family. Tetramer of two alpha and two beta chains. Requires pyridoxal 5'-phosphate as cofactor.

It carries out the reaction (1S,2R)-1-C-(indol-3-yl)glycerol 3-phosphate + L-serine = D-glyceraldehyde 3-phosphate + L-tryptophan + H2O. It participates in amino-acid biosynthesis; L-tryptophan biosynthesis; L-tryptophan from chorismate: step 5/5. Its function is as follows. The beta subunit is responsible for the synthesis of L-tryptophan from indole and L-serine. The protein is Tryptophan synthase beta chain of Serratia proteamaculans (strain 568).